Reading from the N-terminus, the 670-residue chain is MEEFRRSYSRLCRESGAEPQEAVLQQLHQLPRGRLDLATQSLTVETCRALGKLLPRETLCTELVLSDCMLSEEGATLLLRGLCANTVLRFLDLKGNNLRAAGAEALGKLLQQNKSIQSLTLEWNSLGTWDDAFATFCGGLAANGALQRLDLRNNQISHKGAEELALALKGNTTLQQLDLRWNNVGLLGGRALMNCLPSNRTLWRLDLAGNNIPGDVLRAVEQAMGHSQDRLTTFQENQARTHVLSKEVQHLREEKSKQFLDLMETIDKQREEMAKSSRASAARVGQLQEALNERHSIINALKAKLQMTEAALALSEQKAQDLGELLATAEQEQLSLSQRQAKELKLEQQEAAERESKLLRDLSAANEKNLLLQNQVDELERKFRCQQEQLFQTRQEMTSMSAELKMRAIQAEERLDMEKRRCRQSLEDSESLRIKEVEHMTRHLEESEKAMQERVQRLEAARLSLEEELSRVKAAALSERGQAEEELIKAKSQARLEEQQRLAHLEDKLRLLAQARDEAQGACLQQKQVVAEAQTRVSQLGLQVEGLRRRLEELQQELSLKDQERVAEVSRVRVELQEQNGRLQAELAAQEALREKAAALERQLKVMASDHREALLDRESENASLREKLRLREAEIARIRDEEAQRASFLQNAVLAYVQASPVRTLSPPK.

6 LRR repeats span residues 58-80, 87-107, 115-136, 145-166, 173-194, and 201-212; these read TLCTELVLSDCMLSEEGATLLLR, VLRFLDLKGNNLRAAGAEALG, SIQSLTLEWNSLGTWDDAFATF, ALQRLDLRNNQISHKGAEELAL, TLQQLDLRWNNVGLLGGRALMN, and TLWRLDLAGNNI. Residues 252–645 are a coiled coil; it reads REEKSKQFLD…IARIRDEEAQ (394 aa). Residue S661 is modified to Phosphoserine; by NEK2.

As to quaternary structure, homomer. Interacts with CROCC/rootletin and CEP250. Interacts with CEP44. Interacts with CCDC102B (via N-terminus). Post-translationally, phosphorylated by NEK2 during misosis, phosphorylation reduces centrosomal localization which subsequently leads to centrosome separation.

It localises to the cytoplasm. The protein resides in the cytoskeleton. Its subcellular location is the microtubule organizing center. The protein localises to the centrosome. In terms of biological role, component of the proteinaceous fiber-like linker between two centrioles, required for centrosome cohesion. The sequence is that of Leucine-rich repeat-containing protein 45 (LRRC45) from Homo sapiens (Human).